The chain runs to 341 residues: Ectoine-binding periplasmic protein TeaA (341 aa).

A signal peptide spans 1 to 25 (MKAYKLLTTASIGALMLGMSTAAYS). Residues Glu-34, Arg-169, Asn-209, Trp-213, and Phe-234 each coordinate L-ectoine.

The protein belongs to the bacterial solute-binding protein 7 family. As to quaternary structure, monomer. The complex comprises the extracytoplasmic solute receptor protein TeaA, and the two transmembrane proteins TeaB and TeaC.

Its subcellular location is the periplasm. Functionally, part of the tripartite ATP-independent periplasmic (TRAP) transport system TeaABC involved in the uptake of ectoine and hydroxyectoine in response to osmotic upshock. Probably functions as a recovery system for synthesized ectoine that leaks out of the cell. Binds ectoine with high affinity. Affinity for hydroxyectoine is approximately 20-fold lower. This chain is Ectoine-binding periplasmic protein TeaA (teaA), found in Halomonas elongata (strain ATCC 33173 / DSM 2581 / NBRC 15536 / NCIMB 2198 / 1H9).